Consider the following 505-residue polypeptide: Zinc finger protein 649 (505 aa).

A KRAB domain is found at 8–79 (LTLEDVAVDF…EDEIHSPAHP (72 aa)). Residue Lys-112 forms a Glycyl lysine isopeptide (Lys-Gly) (interchain with G-Cter in SUMO2) linkage. 10 consecutive C2H2-type zinc fingers follow at residues 178–200 (HECTDCGKAFLKKSQLTEHKRIH), 206–228 (HVCSLCGKAFYKKYRLTEHERAH), 234–256 (HGCSLCGKAFYKRYRLTEHERAH), 262–284 (YGCSECGKAFPRKSELTEHQRIH), 290–312 (HQCSECGRAFSRKSLLVVHQRTH), 318–340 (HTCSECGKGFIQKGNLNIHQRTH), 346–368 (YGCIDCGKAFSQKSCLVAHQRYH), 374–396 (FVCPECGQPCSQKSGLIRHQKIH), 402–424 (YKCSDCGKAFLTKTMLIVHHRTH), and 430–452 (YGCDECEKAYFYMSCLVKHKRIH). The interval 455–481 (EKRGDSVKVENPSTASHSLSPSEHVQG) is disordered. Residues 465-477 (NPSTASHSLSPSE) show a composition bias toward polar residues.

It belongs to the krueppel C2H2-type zinc-finger protein family. As to expression, highly expressed in heart, skeletal muscle, and brain. Lower expression in liver, lung, kidney, pancreas and placenta.

Its subcellular location is the nucleus. Functionally, transcriptional repressor. Regulator of transcriptional factor complexes and may suppress SRE and AP-1 transcription activities mediated by growth factor signaling pathways. The protein is Zinc finger protein 649 (ZNF649) of Homo sapiens (Human).